The chain runs to 465 residues: Cysteine--tRNA ligase (465 aa).

C30 is a binding site for Zn(2+). A 'HIGH' region motif is present at residues 32-42 (ITVYDYCHVGH). The Zn(2+) site is built by C214, H239, and E243. The short motif at 271–275 (KMSKS) is the 'KMSKS' region element. K274 is an ATP binding site.

Belongs to the class-I aminoacyl-tRNA synthetase family. As to quaternary structure, monomer. It depends on Zn(2+) as a cofactor.

It is found in the cytoplasm. It catalyses the reaction tRNA(Cys) + L-cysteine + ATP = L-cysteinyl-tRNA(Cys) + AMP + diphosphate. The protein is Cysteine--tRNA ligase of Burkholderia cenocepacia (strain HI2424).